Here is a 946-residue protein sequence, read N- to C-terminus: Bifunctional glutamine synthetase adenylyltransferase/adenylyl-removing enzyme (946 aa).

The tract at residues 1–440 (MKPLSSPLQQ…VFNELIGDDE (440 aa)) is adenylyl removase. Positions 449-946 (SEQWRELWQD…ASWQKWLVEE (498 aa)) are adenylyl transferase.

Belongs to the GlnE family. Requires Mg(2+) as cofactor.

It catalyses the reaction [glutamine synthetase]-O(4)-(5'-adenylyl)-L-tyrosine + phosphate = [glutamine synthetase]-L-tyrosine + ADP. The enzyme catalyses [glutamine synthetase]-L-tyrosine + ATP = [glutamine synthetase]-O(4)-(5'-adenylyl)-L-tyrosine + diphosphate. Its function is as follows. Involved in the regulation of glutamine synthetase GlnA, a key enzyme in the process to assimilate ammonia. When cellular nitrogen levels are high, the C-terminal adenylyl transferase (AT) inactivates GlnA by covalent transfer of an adenylyl group from ATP to specific tyrosine residue of GlnA, thus reducing its activity. Conversely, when nitrogen levels are low, the N-terminal adenylyl removase (AR) activates GlnA by removing the adenylyl group by phosphorolysis, increasing its activity. The regulatory region of GlnE binds the signal transduction protein PII (GlnB) which indicates the nitrogen status of the cell. This chain is Bifunctional glutamine synthetase adenylyltransferase/adenylyl-removing enzyme, found in Escherichia coli (strain K12 / MC4100 / BW2952).